The primary structure comprises 156 residues: Small ribosomal subunit protein uS7 (156 aa).

The protein belongs to the universal ribosomal protein uS7 family. As to quaternary structure, part of the 30S ribosomal subunit. Contacts proteins S9 and S11.

One of the primary rRNA binding proteins, it binds directly to 16S rRNA where it nucleates assembly of the head domain of the 30S subunit. Is located at the subunit interface close to the decoding center, probably blocks exit of the E-site tRNA. The chain is Small ribosomal subunit protein uS7 from Pseudomonas entomophila (strain L48).